The sequence spans 207 residues: Ribosomal RNA small subunit methyltransferase G (207 aa).

S-adenosyl-L-methionine contacts are provided by residues Gly-74, Leu-79, 125-126, and Arg-140; that span reads VE.

The protein belongs to the methyltransferase superfamily. RNA methyltransferase RsmG family.

The protein localises to the cytoplasm. It catalyses the reaction guanosine(527) in 16S rRNA + S-adenosyl-L-methionine = N(7)-methylguanosine(527) in 16S rRNA + S-adenosyl-L-homocysteine. In terms of biological role, specifically methylates the N7 position of guanine in position 527 of 16S rRNA. In Shewanella loihica (strain ATCC BAA-1088 / PV-4), this protein is Ribosomal RNA small subunit methyltransferase G.